We begin with the raw amino-acid sequence, 383 residues long: Cytochrome b (383 aa).

A run of 4 helical transmembrane segments spans residues 30–50, 74–96, 109–129, and 175–195; these read FGSLLGLCLGIQILTGVLLAM, WILRYVHANGASLFFICVYCHIG, TWIVGVLIYFIMMLTAFIGYV, and FFSLHYLLPFVLVGLVLAHLL. The heme b site is built by histidine 80 and histidine 94. The heme b site is built by histidine 179 and histidine 193. An a ubiquinone-binding site is contributed by histidine 198. 4 consecutive transmembrane segments (helical) span residues 221 to 241, 289 to 309, 320 to 340, and 345 to 365; these read FTIKDILGFLILLGVFVIIGI, GVLALFASILVLLLMPILDRS, AKFFFWFIVGDFFILTWIGSA, and EPYVLIGRIATIFYFGYFLVL.

The protein belongs to the cytochrome b family. As to quaternary structure, the main subunits of complex b-c1 are: cytochrome b, cytochrome c1 and the Rieske protein. Requires heme b as cofactor.

The protein localises to the mitochondrion inner membrane. Functionally, component of the ubiquinol-cytochrome c reductase complex (complex III or cytochrome b-c1 complex) that is part of the mitochondrial respiratory chain. The b-c1 complex mediates electron transfer from ubiquinol to cytochrome c. Contributes to the generation of a proton gradient across the mitochondrial membrane that is then used for ATP synthesis. The chain is Cytochrome b (mt:Cyt-b) from Trichoplax adhaerens (Trichoplax reptans).